The sequence spans 550 residues: Methyl-coenzyme M reductase subunit alpha (550 aa).

Residue Gln147 coordinates coenzyme F430. Residues Arg225, 256–257 (KH), and Arg270 contribute to the coenzyme B site. His257 bears the Pros-methylhistidine mark. Arg271 bears the 5-methylarginine mark. A coenzyme M-binding site is contributed by Tyr333. Position 400 is a 2-methylglutamine (Gln400). Tyr444 contributes to the coenzyme M binding site. Gly445 is modified (1-thioglycine). Asp450 carries the (Z)-2,3-didehydroaspartate modification. The residue at position 452 (Cys452) is an S-methylcysteine.

The protein belongs to the methyl-coenzyme M reductase alpha subunit family. MCR is a hexamer of two alpha, two beta, and two gamma chains, forming a dimer of heterotrimers. It depends on coenzyme F430 as a cofactor. The alpha subunit contains six modified amino acids near the active site region. Is methylated on His-257, Arg-271, Gln-400 and Cys-452, probably by the action of specific S-adenosylmethionine-dependent methyltransferases. Also contains a thioglycine at position 445, forming a thiopeptide bond. Contains a didehydroaspartate residue at position 450. The methylation on C5 of Arg-271 is a post-translational methylation not essential in vivo, but which plays a role for the stability and structural integrity of MCR.

The protein resides in the cytoplasm. The enzyme catalyses coenzyme B + methyl-coenzyme M = methane + coenzyme M-coenzyme B heterodisulfide. Its pathway is one-carbon metabolism; methyl-coenzyme M reduction; methane from methyl-coenzyme M: step 1/1. Functionally, component of the methyl-coenzyme M reductase (MCR) I that catalyzes the reductive cleavage of methyl-coenzyme M (CoM-S-CH3 or 2-(methylthio)ethanesulfonate) using coenzyme B (CoB or 7-mercaptoheptanoylthreonine phosphate) as reductant which results in the production of methane and the mixed heterodisulfide of CoB and CoM (CoM-S-S-CoB). This is the final step in methanogenesis. The chain is Methyl-coenzyme M reductase subunit alpha (mcrA) from Methanothermobacter thermautotrophicus (strain ATCC 29096 / DSM 1053 / JCM 10044 / NBRC 100330 / Delta H) (Methanobacterium thermoautotrophicum).